Reading from the N-terminus, the 56-residue chain is Large ribosomal subunit protein bL32 (56 aa).

Basic residues predominate over residues 1-16 (MAVQKNKKSRSKRGMR). Residues 1–36 (MAVQKNKKSRSKRGMRRSHDSLSTPQLSVDSTSGEL) form a disordered region. Polar residues predominate over residues 21–34 (SLSTPQLSVDSTSG).

The protein belongs to the bacterial ribosomal protein bL32 family.

This chain is Large ribosomal subunit protein bL32, found in Shewanella sediminis (strain HAW-EB3).